The primary structure comprises 260 residues: Tryptophan 2,3-dioxygenase (260 aa).

Substrate contacts are provided by residues 34–38 (FIVIH) and Arg100. A heme-binding site is contributed by His219. Thr233 is a substrate binding site.

Belongs to the tryptophan 2,3-dioxygenase family. Homotetramer. It depends on heme as a cofactor.

The enzyme catalyses L-tryptophan + O2 = N-formyl-L-kynurenine. Its pathway is amino-acid degradation; L-tryptophan degradation via kynurenine pathway; L-kynurenine from L-tryptophan: step 1/2. Functionally, heme-dependent dioxygenase that catalyzes the oxidative cleavage of the L-tryptophan (L-Trp) pyrrole ring and converts L-tryptophan to N-formyl-L-kynurenine. Catalyzes the oxidative cleavage of the indole moiety. In Herpetosiphon aurantiacus (strain ATCC 23779 / DSM 785 / 114-95), this protein is Tryptophan 2,3-dioxygenase.